Consider the following 275-residue polypeptide: Putative phosphoenolpyruvate synthase regulatory protein (275 aa).

Residue 153–160 (GVSRSGKT) coordinates ADP.

The protein belongs to the pyruvate, phosphate/water dikinase regulatory protein family. PSRP subfamily.

It carries out the reaction [pyruvate, water dikinase] + ADP = [pyruvate, water dikinase]-phosphate + AMP + H(+). The enzyme catalyses [pyruvate, water dikinase]-phosphate + phosphate + H(+) = [pyruvate, water dikinase] + diphosphate. In terms of biological role, bifunctional serine/threonine kinase and phosphorylase involved in the regulation of the phosphoenolpyruvate synthase (PEPS) by catalyzing its phosphorylation/dephosphorylation. The protein is Putative phosphoenolpyruvate synthase regulatory protein of Nitrosomonas eutropha (strain DSM 101675 / C91 / Nm57).